We begin with the raw amino-acid sequence, 454 residues long: Probable N-octanoylanthranilate hydrolase AqdA2 (454 aa).

The active-site Acyl-ester intermediate is the serine 185. Catalysis depends on charge relay system residues glutamate 306 and histidine 379.

The protein belongs to the type-B carboxylesterase/lipase family.

It carries out the reaction N-octanoylanthranilate + H2O = anthranilate + octanoate + H(+). Functionally, involved in the degradation of the Pseudomonas aeruginosa quorum sensing signal molecules HHQ (2-heptyl-4-quinolone) and PQS (2-heptyl-3-hydroxy-4-quinolone) to anthranilic acid. Probably catalyzes the hydrolysis of N-octanoylanthranilic acid to anthranilic acid. This chain is Probable N-octanoylanthranilate hydrolase AqdA2, found in Rhodococcus erythropolis (Arthrobacter picolinophilus).